A 258-amino-acid polypeptide reads, in one-letter code: UPF0246 protein NTHI1156 (258 aa).

Belongs to the UPF0246 family.

This Haemophilus influenzae (strain 86-028NP) protein is UPF0246 protein NTHI1156.